Consider the following 883-residue polypeptide: Protein argonaute 16 (883 aa).

Positions 254 to 366 (PVFDFLLTNQ…VPIELCHMVS (113 aa)) constitute a PAZ domain. The Piwi domain occupies 535–844 (FLLCVLPERK…AAAQMGQFMK (310 aa)).

The protein belongs to the argonaute family. Ago subfamily.

In terms of biological role, probably involved in the RNA silencing pathway. May bind to short RNAs such as microRNAs (miRNAs) or short interfering RNAs (siRNAs), and represses the translation of mRNAs which are complementary to them. This chain is Protein argonaute 16 (AGO16), found in Oryza sativa subsp. japonica (Rice).